The chain runs to 250 residues: Coproheme decarboxylase (250 aa).

Fe-coproporphyrin III is bound by residues Arg-131, 145–149 (YPMNK), His-172, and Gln-185. Tyr-145 is a catalytic residue.

The protein belongs to the ChdC family. Type 1 subfamily. Fe-coproporphyrin III serves as cofactor.

The catalysed reaction is Fe-coproporphyrin III + 2 H2O2 + 2 H(+) = heme b + 2 CO2 + 4 H2O. It catalyses the reaction Fe-coproporphyrin III + H2O2 + H(+) = harderoheme III + CO2 + 2 H2O. The enzyme catalyses harderoheme III + H2O2 + H(+) = heme b + CO2 + 2 H2O. Its pathway is porphyrin-containing compound metabolism; protoheme biosynthesis. Involved in coproporphyrin-dependent heme b biosynthesis. Catalyzes the decarboxylation of Fe-coproporphyrin III (coproheme) to heme b (protoheme IX), the last step of the pathway. The reaction occurs in a stepwise manner with a three-propionate intermediate. In Staphylococcus aureus (strain MSSA476), this protein is Coproheme decarboxylase.